The chain runs to 470 residues: Uronate isomerase (470 aa).

It belongs to the metallo-dependent hydrolases superfamily. Uronate isomerase family.

It catalyses the reaction D-glucuronate = D-fructuronate. It carries out the reaction aldehydo-D-galacturonate = keto-D-tagaturonate. It functions in the pathway carbohydrate metabolism; pentose and glucuronate interconversion. The polypeptide is Uronate isomerase (Sphingopyxis alaskensis (strain DSM 13593 / LMG 18877 / RB2256) (Sphingomonas alaskensis)).